Here is a 1091-residue protein sequence, read N- to C-terminus: Voltage-dependent calcium channel subunit alpha-2/delta-1 (1091 aa).

The signal sequence occupies residues 1–24; sequence MAAGCLLALTLTLFQSWLIGPSSE. The Extracellular portion of the chain corresponds to 25–1061; the sequence is EPFPSPVTIK…VLEDYTDCGG (1037 aa). A glycan (N-linked (GlcNAc...) asparagine) is linked at Asn-92. Phosphoserine is present on Ser-119. N-linked (GlcNAc...) asparagine glycans are attached at residues Asn-136 and Asn-184. Positions 252–429 constitute a VWFA domain; that stretch reads DMLILVDVSG…INTQEYLDVL (178 aa). 3 residues coordinate a divalent metal cation: Asp-258, Ser-260, and Ser-262. Residues 258–262 carry the MIDAS-like motif motif; that stretch reads DVSGS. Asn-323 and Asn-347 each carry an N-linked (GlcNAc...) asparagine glycan. Cysteines 403 and 1047 form a disulfide. The Cache domain occupies 445–536; that stretch reads WTNVYLDALE…QPKNPKSQEP (92 aa). N-linked (GlcNAc...) asparagine glycans are attached at residues Asn-593, Asn-769, Asn-876, and Asn-973. The helical transmembrane segment at 1062-1082 threads the bilayer; sequence VSGLNPSLWSIFGLQFILLWL. The Cytoplasmic portion of the chain corresponds to 1083-1091; that stretch reads VSGSRHYLW.

It belongs to the calcium channel subunit alpha-2/delta family. In terms of assembly, dimer formed of alpha-2-1 and delta-1 chains; disulfide-linked. Voltage-dependent calcium channels are multisubunit complexes, consisting of alpha-1 (CACNA1), alpha-2 (CACNA2D), beta (CACNB) and delta (CACNA2D) subunits in a 1:1:1:1 ratio. Proteolytically processed into subunits alpha-2-1 and delta-1 that are disulfide-linked.

Its subcellular location is the membrane. It is found in the cell membrane. Its function is as follows. The alpha-2/delta subunit of voltage-dependent calcium channels regulates calcium current density and activation/inactivation kinetics of the calcium channel. Plays an important role in excitation-contraction coupling. In Rattus norvegicus (Rat), this protein is Voltage-dependent calcium channel subunit alpha-2/delta-1 (Cacna2d1).